The sequence spans 438 residues: L-cysteine:1D-myo-inositol 2-amino-2-deoxy-alpha-D-glucopyranoside ligase (438 aa).

The segment at 1–27 (MDSWTSPDVPALPFTAEGPRVHDTARG) is disordered. Residue Cys45 coordinates Zn(2+). L-cysteinyl-5'-AMP is bound by residues 45 to 48 (CGIT), Thr60, and 83 to 85 (NVT). The 'HIGH' region signature appears at 47 to 57 (ITPYDATHLGH). The 'ERGGDP' region signature appears at 197–202 (DRGGDP). Residue Trp238 participates in L-cysteinyl-5'-AMP binding. A Zn(2+)-binding site is contributed by Cys242. 260 to 262 (GDD) contacts L-cysteinyl-5'-AMP. His267 is a binding site for Zn(2+). Position 293 (Val293) interacts with L-cysteinyl-5'-AMP. The 'KMSKS' region motif lies at 299 to 303 (KMSKS).

Belongs to the class-I aminoacyl-tRNA synthetase family. MshC subfamily. As to quaternary structure, monomer. Requires Zn(2+) as cofactor.

It carries out the reaction 1D-myo-inositol 2-amino-2-deoxy-alpha-D-glucopyranoside + L-cysteine + ATP = 1D-myo-inositol 2-(L-cysteinylamino)-2-deoxy-alpha-D-glucopyranoside + AMP + diphosphate + H(+). Catalyzes the ATP-dependent condensation of GlcN-Ins and L-cysteine to form L-Cys-GlcN-Ins. The polypeptide is L-cysteine:1D-myo-inositol 2-amino-2-deoxy-alpha-D-glucopyranoside ligase (Kytococcus sedentarius (strain ATCC 14392 / DSM 20547 / JCM 11482 / CCUG 33030 / NBRC 15357 / NCTC 11040 / CCM 314 / 541) (Micrococcus sedentarius)).